Here is a 590-residue protein sequence, read N- to C-terminus: Aspartate--tRNA(Asp/Asn) ligase (590 aa).

Glu-175 is a binding site for L-aspartate. Residues 199–202 (QQYK) form an aspartate region. Arg-221 and His-450 together coordinate L-aspartate. 221–223 (RDE) lines the ATP pocket. Glu-484 contributes to the ATP binding site. Arg-491 is a binding site for L-aspartate. 536-539 (GVDR) contributes to the ATP binding site.

It belongs to the class-II aminoacyl-tRNA synthetase family. Type 1 subfamily. In terms of assembly, homodimer.

It is found in the cytoplasm. The catalysed reaction is tRNA(Asx) + L-aspartate + ATP = L-aspartyl-tRNA(Asx) + AMP + diphosphate. Aspartyl-tRNA synthetase with relaxed tRNA specificity since it is able to aspartylate not only its cognate tRNA(Asp) but also tRNA(Asn). Reaction proceeds in two steps: L-aspartate is first activated by ATP to form Asp-AMP and then transferred to the acceptor end of tRNA(Asp/Asn). The chain is Aspartate--tRNA(Asp/Asn) ligase from Nitrobacter winogradskyi (strain ATCC 25391 / DSM 10237 / CIP 104748 / NCIMB 11846 / Nb-255).